Here is a 356-residue protein sequence, read N- to C-terminus: Hyaluronan and proteoglycan link protein 1 (356 aa).

The propeptide occupies 1-9 (MRSLLLLVL). One can recognise an Ig-like V-type domain in the interval 40–154 (PRLLVEAEQA…EGLEDDTAVV (115 aa)). The N-linked (GlcNAc...) asparagine glycan is linked to N58. 5 cysteine pairs are disulfide-bonded: C63–C141, C183–C254, C207–C228, C281–C351, and C306–C327. Link domains are found at residues 161–256 (VVFP…FCFT) and 261–353 (GRFY…YCFR).

Belongs to the HAPLN family. As to expression, ubiquitously expressed.

It localises to the secreted. The protein resides in the extracellular space. It is found in the extracellular matrix. Functionally, stabilizes the aggregates of proteoglycan monomers with hyaluronic acid in the extracellular cartilage matrix. The polypeptide is Hyaluronan and proteoglycan link protein 1 (Hapln1) (Mus musculus (Mouse)).